A 324-amino-acid polypeptide reads, in one-letter code: MSVEDGGMPGLSRPRQARWTLMLLLSTAMYGAHAPLLALCHVDGRVPFRPSSAVLLTELTKLLLCAFSLLVGWQAWPQGAPPWRQAAPFALSALLYGANNNLVIYLQRYMDPSTYQVLSNLKIGSTAVLYCLCLRHRLSVRQGLALLLLMAAGACYAAGGLQVPGNTLPRPPPAAAASPMPLHITPLGLLLLILYCLISGLSSVYTELLMKRQQLPLALQNLFLYTFGVLLNLGLHAGGGPGPGLLEGFSGWAALVVLSQALNGLLMSVVMKHGSSITRLFVVSCSLVVNAVLSAVLLRLQLTAAFFLATLLIGLAMRLYYGSR.

At 1–18 (MSVEDGGMPGLSRPRQAR) the chain is on the cytoplasmic side. A helical membrane pass occupies residues 19-39 (WTLMLLLSTAMYGAHAPLLAL). At 40–52 (CHVDGRVPFRPSS) the chain is on the lumenal side. A helical transmembrane segment spans residues 53-73 (AVLLTELTKLLLCAFSLLVGW). Over 74–85 (QAWPQGAPPWRQ) the chain is Cytoplasmic. A helical transmembrane segment spans residues 86-106 (AAPFALSALLYGANNNLVIYL). Over 107-142 (QRYMDPSTYQVLSNLKIGSTAVLYCLCLRHRLSVRQ) the chain is Lumenal. Residues 143-163 (GLALLLLMAAGACYAAGGLQV) form a helical membrane-spanning segment. Over 164–180 (PGNTLPRPPPAAAASPM) the chain is Cytoplasmic. A helical transmembrane segment spans residues 181–201 (PLHITPLGLLLLILYCLISGL). The Lumenal segment spans residues 202–214 (SSVYTELLMKRQQ). A helical transmembrane segment spans residues 215–235 (LPLALQNLFLYTFGVLLNLGL). Topologically, residues 236-250 (HAGGGPGPGLLEGFS) are cytoplasmic. Residues 251-271 (GWAALVVLSQALNGLLMSVVM) traverse the membrane as a helical segment. The Lumenal portion of the chain corresponds to 272–275 (KHGS). A helical transmembrane segment spans residues 276-298 (SITRLFVVSCSLVVNAVLSAVLL). Residues 299-324 (RLQLTAAFFLATLLIGLAMRLYYGSR) are Cytoplasmic-facing.

The protein belongs to the nucleotide-sugar transporter family. SLC35A subfamily. Found in a complex with SLC35A2 and SLC35A3.

Its subcellular location is the golgi apparatus membrane. The catalysed reaction is CDP-L-ribitol(in) + CDP(out) = CDP-L-ribitol(out) + CDP(in). Its function is as follows. Mediates the transport of CDP-ribitol. Does not exhibit CMP-sialic acid, UDP-galactose and UDP-N-acetylglucosamine transport activity. The polypeptide is Probable UDP-sugar transporter protein SLC35A4 (Pongo abelii (Sumatran orangutan)).